Consider the following 662-residue polypeptide: Fusion glycoprotein F0 (662 aa).

The segment at 1–73 (MHRGIPKSSK…TRSRKQTSHR (73 aa)) is disordered. Positions 1 to 135 (MHRGIPKSSK…MASLFLCSKA (135 aa)) are cleaved as a signal peptide. The span at 8-19 (SSKTQTHTQQDR) shows a compositional bias: polar residues. Residues 64 to 73 (TRSRKQTSHR) are compositionally biased toward basic residues. The Extracellular segment spans residues 136–608 (QIHWDNLSTI…VRRSSFNFGS (473 aa)). N-linked (GlcNAc...) asparagine; by host glycans are attached at residues Asn-141, Asn-173, and Asn-179. The tract at residues 225-249 (FAGVVLAGVALGVATAAQITAGIAL) is fusion peptide. The stretch at 250–278 (HQSNLNAQAIQSLRTSLEQSNKAIEEIRE) forms a coiled coil. Intrachain disulfides connect Cys-446–Cys-455, Cys-470–Cys-478, Cys-502–Cys-507, and Cys-509–Cys-532. Residues 574–599 (NLGNALKKLDDAKVLIDSSNQILETV) adopt a coiled-coil conformation. Residues 609 to 629 (LLSVPILSCTALALLLLIYCC) traverse the membrane as a helical segment. Over 630-662 (KRRYQQTLKQHTKVDPAFKPDLTGTSKSYVRSL) the chain is Cytoplasmic.

It belongs to the paramyxoviruses fusion glycoprotein family. As to quaternary structure, homotrimer of disulfide-linked F1-F2. Post-translationally, the inactive precursor F0 is glycosylated and proteolytically cleaved into F1 and F2 to be functionally active. The cleavage is mediated by cellular proteases during the transport and maturation of the polypeptide.

It is found in the virion membrane. The protein resides in the host cell membrane. In terms of biological role, class I viral fusion protein. Under the current model, the protein has at least 3 conformational states: pre-fusion native state, pre-hairpin intermediate state, and post-fusion hairpin state. During viral and plasma cell membrane fusion, the heptad repeat (HR) regions assume a trimer-of-hairpins structure, positioning the fusion peptide in close proximity to the C-terminal region of the ectodomain. The formation of this structure appears to drive apposition and subsequent fusion of viral and plasma cell membranes. Directs fusion of viral and cellular membranes leading to delivery of the nucleocapsid into the cytoplasm. This fusion is pH independent and occurs directly at the outer cell membrane. The trimer of F1-F2 (F protein) probably interacts with H at the virion surface. Upon HN binding to its cellular receptor, the hydrophobic fusion peptide is unmasked and interacts with the cellular membrane, inducing the fusion between cell and virion membranes. Later in infection, F proteins expressed at the plasma membrane of infected cells could mediate fusion with adjacent cells to form syncytia, a cytopathic effect that could lead to tissue necrosis. The protein is Fusion glycoprotein F0 (F) of Canine distemper virus (strain Onderstepoort) (CDV).